The following is a 385-amino-acid chain: Homoserine O-succinyltransferase (385 aa).

An AB hydrolase-1 domain is found at 51-360 (NAVLICHALS…DSPHGHDAFL (310 aa)). Ser-157 (nucleophile) is an active-site residue. Arg-227 is a substrate binding site. Catalysis depends on residues Asp-323 and His-356. Asp-357 contacts substrate.

The protein belongs to the AB hydrolase superfamily. MetX family. As to quaternary structure, homodimer.

Its subcellular location is the cytoplasm. The catalysed reaction is L-homoserine + succinyl-CoA = O-succinyl-L-homoserine + CoA. It participates in amino-acid biosynthesis; L-methionine biosynthesis via de novo pathway; O-succinyl-L-homoserine from L-homoserine: step 1/1. Transfers a succinyl group from succinyl-CoA to L-homoserine, forming succinyl-L-homoserine. The protein is Homoserine O-succinyltransferase of Hahella chejuensis (strain KCTC 2396).